The following is a 60-amino-acid chain: MDPCQCSKSGTCNCGGSCTCTNCSCKSCKKSCCPCCPSGCTKCASGCVCKGKTCDTSCCQ.

Residues 1–28 (MDPCQCSKSGTCNCGGSCTCTNCSCKSC) form a beta region. Positions 4, 6, 12, 14, 18, 20, 23, 25, 28, 32, 33, 35, 36, 40, 43, 47, 49, 54, 58, and 59 each coordinate a divalent metal cation. The segment at 29–60 (KKSCCPCCPSGCTKCASGCVCKGKTCDTSCCQ) is alpha.

It belongs to the metallothionein superfamily. Type 1 family.

Metallothioneins have a high content of cysteine residues that bind various heavy metals. The polypeptide is Metallothionein A (mta) (Trematomus bernacchii (Emerald rockcod)).